The chain runs to 505 residues: MDLLLLEKTLLGLFLAAVVAIVVSKLRGKRFKLPPGPLPVPIFGNWLQVGDDLNHRNLTQLAKRFGDIFLLRMGQRNLVVVSSPDLAKEVLHTQGVEFGSRTRNVVFDIFTGEGQDMVFTVYGEHWRKMRRIMTVPFFTNKVVQQYRHGWEAEAAAVVDDVRKNPDAAVSGLVIRRRLQLMMYNNMYRIMFDRRFESEEDPLFQRLKALNGERSRLAQSFEYNYGDFIPILRPFLKGYLKICKEVKETRLKLFKDYFVDERKNIGSTKSTNNEGLKCAIDHILDAEKKGEINEDNVLYIVENINVAAIETTLWSIEWGIAELVNHPEIQQKVRDEIDRVLGVGHQVTEPDIQKLPYLQAVVKETLRLRMAIPLLVPHMNLHDAKLGGYDIPAESKILVNAWWLANNPAHWKKPEEFRPERFFEEESHVEANGNDFRYLPFGVGRRSCPGIILALPILGITLGRLVQNFELLPPPGQSQIDTSEKGGQFSLHILKHSTVVAKPRSF.

The chain crosses the membrane as a helical span at residues 3–23; the sequence is LLLLEKTLLGLFLAAVVAIVV. (E)-cinnamate contacts are provided by residues 213–218 and Ala306; that span reads RSRLAQ. A heme-binding site is contributed by Cys447.

This sequence belongs to the cytochrome P450 family. Heme serves as cofactor.

It is found in the membrane. It catalyses the reaction (E)-cinnamate + reduced [NADPH--hemoprotein reductase] + O2 = (E)-4-coumarate + oxidized [NADPH--hemoprotein reductase] + H2O + H(+). Its pathway is phenylpropanoid metabolism; trans-4-coumarate biosynthesis; trans-4-coumarate from trans-cinnamate: step 1/1. In terms of biological role, catalyzes the first oxidative step of the phenylpropanoid pathway in higher plants by transforming trans-cinnamate into p-coumarate. The compounds formed by this pathway are essential components for lignification, pollination, and defense against ultraviolet light, predators and pathogens. This chain is Trans-cinnamate 4-monooxygenase (CYP73A2), found in Vigna radiata var. radiata (Mung bean).